The primary structure comprises 354 residues: 3-isopropylmalate dehydrogenase (354 aa).

Residue G76–E87 coordinates NAD(+). Substrate-binding residues include R94, R104, R130, and D215. D215, D239, and D243 together coordinate Mg(2+). G273 to N285 provides a ligand contact to NAD(+).

This sequence belongs to the isocitrate and isopropylmalate dehydrogenases family. LeuB type 1 subfamily. As to quaternary structure, homodimer. Mg(2+) is required as a cofactor. The cofactor is Mn(2+).

The protein localises to the cytoplasm. It catalyses the reaction (2R,3S)-3-isopropylmalate + NAD(+) = 4-methyl-2-oxopentanoate + CO2 + NADH. It participates in amino-acid biosynthesis; L-leucine biosynthesis; L-leucine from 3-methyl-2-oxobutanoate: step 3/4. Functionally, catalyzes the oxidation of 3-carboxy-2-hydroxy-4-methylpentanoate (3-isopropylmalate) to 3-carboxy-4-methyl-2-oxopentanoate. The product decarboxylates to 4-methyl-2 oxopentanoate. This chain is 3-isopropylmalate dehydrogenase, found in Bacillus cereus (strain ZK / E33L).